The following is a 317-amino-acid chain: Non-structural protein 2 (317 aa).

ATP is bound by residues 107–109 (SVR), Lys188, and 221–223 (HGK). The RNA-binding stretch occupies residues 205 to 241 (LIAELRWQYNKFAVITHGKGHYRVVKYSSVANHADRV). His225 acts as the For NTPase and RTPase activities in catalysis. Arg227 is a binding site for ATP.

This sequence belongs to the rotavirus NSP2 family. As to quaternary structure, homooctamer. Interacts with VP1; this interaction is weak. Interacts with NSP5; this interaction leads to up-regulation of NSP5 phosphorylation and formation of viral factories. Interacts with host DCP1A, DCP1B, DDX6, EDC4 and EIF2S1/eIF2-alpha; these interactions are probably part of the sequestration of some host SGs and PBs proteins in viral factories. Mg(2+) serves as cofactor.

Its subcellular location is the host cytoplasm. Its function is as follows. Participates in replication and packaging of the viral genome. Plays a crucial role, together with NSP5, in the formation of virus factories (viroplasms), which are large inclusions in the host cytoplasm where replication intermediates are assembled and viral RNA replication takes place. Displays ssRNA binding, NTPase, RNA triphosphatase (RTPase) and ATP-independent helix-unwinding activities. The unwinding activity may prepare and organize plus-strand RNAs for packaging and replication by removing interfering secondary structures. The RTPase activity plays a role in the removal of the gamma-phosphate from the rotavirus RNA minus strands of dsRNA genome segments. Participates in the selective exclusion of host proteins from stress granules (SG) and P bodies (PB). Also participates in the sequestration of these remodeled organelles in viral factories. This Rotavirus A (strain RVA/Cow/United Kingdom/UK/1975/G6P7[5]) (RV-A) protein is Non-structural protein 2.